Reading from the N-terminus, the 530-residue chain is Phosphoenolpyruvate carboxykinase (ATP) (530 aa).

Positions 57, 193, and 199 each coordinate substrate. Residues Lys199, His218, and 234 to 242 (GLSGTGKTT) each bind ATP. Mn(2+)-binding residues include Lys199 and His218. Residue Asp255 coordinates Mn(2+). ATP-binding residues include Glu283, Arg320, and Thr445. Arg320 lines the substrate pocket.

The protein belongs to the phosphoenolpyruvate carboxykinase (ATP) family. Mn(2+) is required as a cofactor.

The protein localises to the cytoplasm. It carries out the reaction oxaloacetate + ATP = phosphoenolpyruvate + ADP + CO2. Its pathway is carbohydrate biosynthesis; gluconeogenesis. In terms of biological role, involved in the gluconeogenesis. Catalyzes the conversion of oxaloacetate (OAA) to phosphoenolpyruvate (PEP) through direct phosphoryl transfer between the nucleoside triphosphate and OAA. The sequence is that of Phosphoenolpyruvate carboxykinase (ATP) from Leptospira interrogans serogroup Icterohaemorrhagiae serovar copenhageni (strain Fiocruz L1-130).